Consider the following 132-residue polypeptide: Ragulator complex protein LAMTOR3 homolog (132 aa).

This sequence belongs to the LAMTOR3 family. As to quaternary structure, part of the Ragulator complex.

Its function is as follows. Regulator of the TOR pathway, a signaling cascade that promotes cell growth in response to growth factors, energy levels, and amino acids. May activate the TOR signaling cascade in response to amino acids. The chain is Ragulator complex protein LAMTOR3 homolog from Dictyostelium discoideum (Social amoeba).